We begin with the raw amino-acid sequence, 963 residues long: Kinesin-1 heavy chain (963 aa).

A2 carries the post-translational modification N-acetylalanine. In terms of domain architecture, Kinesin motor spans 8-325 (NIKVMCRFRP…LLFGQRAKTI (318 aa)). 85-92 (GQTSSGKT) contributes to the ATP binding site. K213 is covalently cross-linked (Glycyl lysine isopeptide (Lys-Gly) (interchain with G-Cter in SUMO2)). The stretch at 329-914 (VCVNVELTAE…AVRSKNMARR (586 aa)) forms a coiled coil. Residues 908–963 (SKNMARRGHSAQIAKPIRPGQHPAASPTHPGTVRGGGSFVQNNQPVGLRGGGGKQS) are disordered. A globular region spans residues 915 to 963 (GHSAQIAKPIRPGQHPAASPTHPGTVRGGGSFVQNNQPVGLRGGGGKQS). S933 and S945 each carry phosphoserine. Residue R956 is modified to Omega-N-methylarginine.

This sequence belongs to the TRAFAC class myosin-kinesin ATPase superfamily. Kinesin family. Kinesin subfamily. Oligomer composed of two heavy chains and two light chains. Interacts with GRIP1 and PPP1R42. Interacts with SYBU. Interacts with JAKMIP1. Interacts with PLEKHM2. Interacts with ECPAS. Interacts with ZFYVE27. Found in a complex with OGT, RHOT1, RHOT2 and TRAK1. Interacts with APP (via cytoplasmic domain).

It localises to the cytoplasm. Its subcellular location is the cytoskeleton. The protein resides in the cytolytic granule membrane. It is found in the lysosome membrane. In terms of biological role, microtubule-dependent motor required for normal distribution of mitochondria and lysosomes. May be involved in the mechanisms of growth arrest induced by exposure to DNA-damaging drugs or by cellular senescence. Can induce formation of neurite-like membrane protrusions in non-neuronal cells in a ZFYVE27-dependent manner. Regulates centrosome and nuclear positioning during mitotic entry. During the G2 phase of the cell cycle in a BICD2-dependent manner, antagonizes dynein function and drives the separation of nuclei and centrosomes. Required for anterograde axonal transportation of MAPK8IP3/JIP3 which is essential for MAPK8IP3/JIP3 function in axon elongation. Through binding with PLEKHM2 and ARL8B, directs lysosome movement toward microtubule plus ends. Involved in NK cell-mediated cytotoxicity. Drives the polarization of cytolytic granules and microtubule-organizing centers (MTOCs) toward the immune synapse between effector NK lymphocytes and target cells. The protein is Kinesin-1 heavy chain (Kif5b) of Mus musculus (Mouse).